The primary structure comprises 239 residues: Uridylate kinase (239 aa).

10–13 serves as a coordination point for ATP; sequence KFSG. The segment at 18-23 is involved in allosteric activation by GTP; sequence GENGFG. A UMP-binding site is contributed by Gly-52. ATP contacts are provided by Gly-53 and Arg-57. UMP-binding positions include Asp-73 and 134-141; that span reads TGNPYFTT. Residues Thr-161, Tyr-167, and Asp-170 each coordinate ATP.

It belongs to the UMP kinase family. Homohexamer.

The protein localises to the cytoplasm. It catalyses the reaction UMP + ATP = UDP + ADP. It participates in pyrimidine metabolism; CTP biosynthesis via de novo pathway; UDP from UMP (UMPK route): step 1/1. Its activity is regulated as follows. Allosterically activated by GTP. Inhibited by UTP. Functionally, catalyzes the reversible phosphorylation of UMP to UDP. This is Uridylate kinase from Campylobacter jejuni subsp. jejuni serotype O:2 (strain ATCC 700819 / NCTC 11168).